We begin with the raw amino-acid sequence, 45 residues long: Cytochrome b559 subunit beta (45 aa).

Residues 20–36 (WLALHTLGVPTVFFLGA) form a helical membrane-spanning segment. Residue His24 participates in heme binding.

The protein belongs to the PsbE/PsbF family. As to quaternary structure, heterodimer of an alpha subunit and a beta subunit. PSII is composed of 1 copy each of membrane proteins PsbA, PsbB, PsbC, PsbD, PsbE, PsbF, PsbH, PsbI, PsbJ, PsbK, PsbL, PsbM, PsbT, PsbX, PsbY, PsbZ, Psb30/Ycf12, peripheral proteins PsbO, CyanoQ (PsbQ), PsbU, PsbV and a large number of cofactors. It forms dimeric complexes. The cofactor is heme b.

It is found in the cellular thylakoid membrane. Its function is as follows. This b-type cytochrome is tightly associated with the reaction center of photosystem II (PSII). PSII is a light-driven water:plastoquinone oxidoreductase that uses light energy to abstract electrons from H(2)O, generating O(2) and a proton gradient subsequently used for ATP formation. It consists of a core antenna complex that captures photons, and an electron transfer chain that converts photonic excitation into a charge separation. The chain is Cytochrome b559 subunit beta from Parasynechococcus marenigrum (strain WH8102).